Consider the following 156-residue polypeptide: Small ribosomal subunit protein uS7 (156 aa).

The protein belongs to the universal ribosomal protein uS7 family. In terms of assembly, part of the 30S ribosomal subunit. Contacts proteins S9 and S11.

One of the primary rRNA binding proteins, it binds directly to 16S rRNA where it nucleates assembly of the head domain of the 30S subunit. Is located at the subunit interface close to the decoding center, probably blocks exit of the E-site tRNA. This chain is Small ribosomal subunit protein uS7, found in Polynucleobacter necessarius subsp. necessarius (strain STIR1).